A 113-amino-acid chain; its full sequence is MMKCPQALLAIFWLLLSWVSSEDKVVQSPLSLVVHEGDTVTLNCSYEVTNFRSLLWYKQEKKAPTFLFMLTSSGIEKKSGRLSSILDKKELFSILNITATQTGDSAIYLCAVE.

Positions 1-21 (MMKCPQALLAIFWLLLSWVSS) are cleaved as a signal peptide. Positions 23 to 113 (DKVVQSPLSL…DSAIYLCAVE (91 aa)) constitute an Ig-like domain. N-linked (GlcNAc...) asparagine glycans are attached at residues Asn43 and Asn96. Cys44 and Cys110 form a disulfide bridge.

Alpha-beta TR is a heterodimer composed of an alpha and beta chain; disulfide-linked. The alpha-beta TR is associated with the transmembrane signaling CD3 coreceptor proteins to form the TR-CD3 (TcR or TCR). The assembly of alpha-beta TR heterodimers with CD3 occurs in the endoplasmic reticulum where a single alpha-beta TR heterodimer associates with one CD3D-CD3E heterodimer, one CD3G-CD3E heterodimer and one CD247 homodimer forming a stable octameric structure. CD3D-CD3E and CD3G-CD3E heterodimers preferentially associate with TR alpha and TR beta chains, respectively. The association of the CD247 homodimer is the last step of TcR assembly in the endoplasmic reticulum and is required for transport to the cell surface.

The protein resides in the cell membrane. Functionally, v region of the variable domain of T cell receptor (TR) alpha chain that participates in the antigen recognition. Alpha-beta T cell receptors are antigen specific receptors which are essential to the immune response and are present on the cell surface of T lymphocytes. Recognize peptide-major histocompatibility (MH) (pMH) complexes that are displayed by antigen presenting cells (APC), a prerequisite for efficient T cell adaptive immunity against pathogens. Binding of alpha-beta TR to pMH complex initiates TR-CD3 clustering on the cell surface and intracellular activation of LCK that phosphorylates the ITAM motifs of CD3G, CD3D, CD3E and CD247 enabling the recruitment of ZAP70. In turn ZAP70 phosphorylates LAT, which recruits numerous signaling molecules to form the LAT signalosome. The LAT signalosome propagates signal branching to three major signaling pathways, the calcium, the mitogen-activated protein kinase (MAPK) kinase and the nuclear factor NF-kappa-B (NF-kB) pathways, leading to the mobilization of transcription factors that are critical for gene expression and essential for T cell growth and differentiation. The T cell repertoire is generated in the thymus, by V-(D)-J rearrangement. This repertoire is then shaped by intrathymic selection events to generate a peripheral T cell pool of self-MH restricted, non-autoaggressive T cells. Post-thymic interaction of alpha-beta TR with the pMH complexes shapes TR structural and functional avidity. This Homo sapiens (Human) protein is T cell receptor alpha variable 36/delta variable 7.